The following is a 148-amino-acid chain: Augurin (148 aa).

The N-terminal stretch at 1-31 is a signal peptide; the sequence is MSTSSARPAVLALAGLALLLLLCLGPDGISG. Propeptides lie at residues 32–70 and 133–148; these read NKLK…RAKR and SRES…YNDY.

It belongs to the augurin family. Expressed in the intermediate lobe of pituitary, glomerular layer of adrenal cortex, choroid plexus and atrioventricular node of the heart. Expressed in the brain with high expression in the choroid plexus and the epithelial lining of the central canal and expression in the gray matter of the spinal cord (at protein level).

The protein resides in the secreted. The protein localises to the cytoplasm. It is found in the apical cell membrane. In terms of biological role, probable hormone that may attenuate cell proliferation and induce senescence of oligodendrocyte and neural precursor cells in the central nervous system. ECRG4-induced senescence is characterized by G1 arrest, RB1 dephosphorylation and accelerated CCND1 and CCND3 proteasomal degradation. The protein is Augurin of Mus musculus (Mouse).